The sequence spans 497 residues: Glycerol kinase (497 aa).

Thr-11 is an ADP binding site. Positions 11, 12, and 13 each coordinate ATP. Thr-11 is a binding site for sn-glycerol 3-phosphate. Arg-15 serves as a coordination point for ADP. Residues Arg-81, Glu-82, Tyr-133, and Asp-242 each coordinate sn-glycerol 3-phosphate. Residues Arg-81, Glu-82, Tyr-133, Asp-242, and Gln-243 each coordinate glycerol. Positions 264 and 307 each coordinate ADP. ATP-binding residues include Thr-264, Gly-307, Gln-311, and Gly-412. ADP contacts are provided by Gly-412 and Asn-416.

Belongs to the FGGY kinase family.

It carries out the reaction glycerol + ATP = sn-glycerol 3-phosphate + ADP + H(+). It functions in the pathway polyol metabolism; glycerol degradation via glycerol kinase pathway; sn-glycerol 3-phosphate from glycerol: step 1/1. With respect to regulation, inhibited by fructose 1,6-bisphosphate (FBP). Its function is as follows. Key enzyme in the regulation of glycerol uptake and metabolism. Catalyzes the phosphorylation of glycerol to yield sn-glycerol 3-phosphate. In Leptothrix cholodnii (strain ATCC 51168 / LMG 8142 / SP-6) (Leptothrix discophora (strain SP-6)), this protein is Glycerol kinase.